A 63-amino-acid polypeptide reads, in one-letter code: Conotoxin TeAr193 (63 aa).

The first 22 residues, 1 to 22 (MRCLPVFVILLLLIASAPSVDA), serve as a signal peptide directing secretion. Residues 23 to 48 (QPKTKDDIPQASFLDNAKRYLQVLES) constitute a propeptide that is removed on maturation.

The protein belongs to the conotoxin T superfamily. Post-translationally, contains 2 disulfide bonds that can be either 'C1-C3, C2-C4' or 'C1-C4, C2-C3', since these disulfide connectivities have been observed for conotoxins with cysteine framework V (for examples, see AC P0DQQ7 and AC P81755). In terms of tissue distribution, expressed by the venom duct.

The protein resides in the secreted. The protein is Conotoxin TeAr193 of Conus textile (Cloth-of-gold cone).